A 354-amino-acid chain; its full sequence is UDP-N-acetylglucosamine--N-acetylmuramyl-(pentapeptide) pyrophosphoryl-undecaprenol N-acetylglucosamine transferase (354 aa).

UDP-N-acetyl-alpha-D-glucosamine is bound by residues 11–13 (TAG), Arg164, Ser194, and Gln289.

The protein belongs to the glycosyltransferase 28 family. MurG subfamily.

Its subcellular location is the cell membrane. The catalysed reaction is di-trans,octa-cis-undecaprenyl diphospho-N-acetyl-alpha-D-muramoyl-L-alanyl-D-glutamyl-meso-2,6-diaminopimeloyl-D-alanyl-D-alanine + UDP-N-acetyl-alpha-D-glucosamine = di-trans,octa-cis-undecaprenyl diphospho-[N-acetyl-alpha-D-glucosaminyl-(1-&gt;4)]-N-acetyl-alpha-D-muramoyl-L-alanyl-D-glutamyl-meso-2,6-diaminopimeloyl-D-alanyl-D-alanine + UDP + H(+). The protein operates within cell wall biogenesis; peptidoglycan biosynthesis. Functionally, cell wall formation. Catalyzes the transfer of a GlcNAc subunit on undecaprenyl-pyrophosphoryl-MurNAc-pentapeptide (lipid intermediate I) to form undecaprenyl-pyrophosphoryl-MurNAc-(pentapeptide)GlcNAc (lipid intermediate II). This Clostridium botulinum (strain Langeland / NCTC 10281 / Type F) protein is UDP-N-acetylglucosamine--N-acetylmuramyl-(pentapeptide) pyrophosphoryl-undecaprenol N-acetylglucosamine transferase.